The chain runs to 299 residues: Nitrogenase iron protein (299 aa).

An ATP-binding site is contributed by 11–18 (GKGGIGKS). Residue cysteine 99 participates in [4Fe-4S] cluster binding. Arginine 102 is subject to ADP-ribosylarginine; by dinitrogenase reductase ADP-ribosyltransferase. Cysteine 133 lines the [4Fe-4S] cluster pocket.

The protein belongs to the NifH/BchL/ChlL family. Homodimer. The cofactor is [4Fe-4S] cluster. Post-translationally, the reversible ADP-ribosylation of Arg-102 inactivates the nitrogenase reductase and regulates nitrogenase activity.

The catalysed reaction is N2 + 8 reduced [2Fe-2S]-[ferredoxin] + 16 ATP + 16 H2O = H2 + 8 oxidized [2Fe-2S]-[ferredoxin] + 2 NH4(+) + 16 ADP + 16 phosphate + 6 H(+). In terms of biological role, the key enzymatic reactions in nitrogen fixation are catalyzed by the nitrogenase complex, which has 2 components: the iron protein and the molybdenum-iron protein. The sequence is that of Nitrogenase iron protein from Rhodopseudomonas palustris (strain BisB5).